The chain runs to 236 residues: Phycocyanobilin:ferredoxin oxidoreductase (236 aa).

The protein belongs to the HY2 family.

The catalysed reaction is (2R,3Z)-phycocyanobilin + 4 oxidized [2Fe-2S]-[ferredoxin] = biliverdin IXalpha + 4 reduced [2Fe-2S]-[ferredoxin] + 4 H(+). In terms of biological role, catalyzes the four-electron reduction of biliverdin IX-alpha (2-electron reduction at both the A and D rings); the reaction proceeds via an isolatable 2-electron intermediate, 181,182-dihydrobiliverdin. This is Phycocyanobilin:ferredoxin oxidoreductase (pcyA) from Thermosynechococcus vestitus (strain NIES-2133 / IAM M-273 / BP-1).